The chain runs to 395 residues: RNA ligase 1 (395 aa).

Positions 48, 65, and 83 each coordinate ATP. The N6-AMP-lysine intermediate role is filled by Lys-113. 3 residues coordinate ATP: Glu-173, Lys-255, and Lys-257. Asp-285 contacts Mg(2+).

It depends on Mg(2+) as a cofactor. Mn(2+) is required as a cofactor.

It catalyses the reaction ATP + (ribonucleotide)n-3'-hydroxyl + 5'-phospho-(ribonucleotide)m = (ribonucleotide)n+m + AMP + diphosphate.. Functionally, RNA ligase that ligates single-stranded nucleic acids in an ATP-dependent manner. Catalyzes both inter- and intra-molecular single-stranded DNA (ssDNA) ligation to &gt;50% completion in a matter of hours at an elevated temperature, although favoring intra-molecular ligation on RNA and single-stranded DNA substrates. Is able to catalyze the adenylation reaction of ssDNA 3'-terminal phosphate (ssDNA 3'p) to 3'-adenylated DNA (ssDNA 3'pp5'A). Does not have significant 3'-adenylation activity with a 3'-phosphorylated nicked dsDNA substrate. This Thermus scotoductus protein is RNA ligase 1.